A 1114-amino-acid polypeptide reads, in one-letter code: Lysylphosphatidylglycerol biosynthesis bifunctional protein LysX (1114 aa).

Basic and acidic residues predominate over residues 1 to 11 (MSASTETHHAS). The disordered stretch occupies residues 1–28 (MSASTETHHASEAAVPTAPRPRPALGSK). The interval 1-618 (MSASTETHHA…GLHSDGSAPG (618 aa)) is phosphatidylglycerol lysyltransferase. The next 6 helical transmembrane spans lie at 38-58 (IAGLILGVFSVLVFLWSISPV), 77-97 (APDTSLSWALVVALLAAALAS), 101-121 (IAWWLLTIYLVLILITNVIVS), 126-146 (NVNAMVAAVVQVVLIGILVAA), 164-184 (GVLIVGLAIGTLVGWGLVELF), and 219-239 (FVNTLLGLFGAMALLAAVITL). Residues 619-1114 (EGLAPTATGP…LAFPLAKPRQ (496 aa)) are lysine--tRNA ligase. The segment at residues 674-751 (VRIAGRLLRI…LSLLANEWRM (78 aa)) is a DNA-binding region (OB). 2 residues coordinate Mg(2+): Asp-1025 and Glu-1032.

The protein in the N-terminal section; belongs to the LPG synthetase family. In the C-terminal section; belongs to the class-II aminoacyl-tRNA synthetase family. Requires Mg(2+) as cofactor.

It is found in the cell membrane. It carries out the reaction tRNA(Lys) + L-lysine + ATP = L-lysyl-tRNA(Lys) + AMP + diphosphate. The enzyme catalyses L-lysyl-tRNA(Lys) + a 1,2-diacyl-sn-glycero-3-phospho-(1'-sn-glycerol) = a 1,2-diacyl-sn-glycero-3-phospho-1'-(3'-O-L-lysyl)-sn-glycerol + tRNA(Lys). Functionally, catalyzes the production of L-lysyl-tRNA(Lys)transfer and the transfer of a lysyl group from L-lysyl-tRNA(Lys) to membrane-bound phosphatidylglycerol (PG), which produces lysylphosphatidylglycerol (LPG), one of the components of the bacterial membrane with a positive net charge. LPG synthesis contributes to the resistance to cationic antimicrobial peptides (CAMPs) and likely protects M.tuberculosis against the CAMPs produced by competiting microorganisms (bacteriocins). In fact, the modification of anionic phosphatidylglycerol with positively charged L-lysine results in repulsion of the peptides. This is Lysylphosphatidylglycerol biosynthesis bifunctional protein LysX (lysX) from Rhodococcus opacus (strain B4).